Here is a 187-residue protein sequence, read N- to C-terminus: Elongation factor P (187 aa).

This sequence belongs to the elongation factor P family.

The protein resides in the cytoplasm. It functions in the pathway protein biosynthesis; polypeptide chain elongation. Its function is as follows. Involved in peptide bond synthesis. Stimulates efficient translation and peptide-bond synthesis on native or reconstituted 70S ribosomes in vitro. Probably functions indirectly by altering the affinity of the ribosome for aminoacyl-tRNA, thus increasing their reactivity as acceptors for peptidyl transferase. This chain is Elongation factor P, found in Mycobacterium ulcerans (strain Agy99).